Consider the following 382-residue polypeptide: Porin-like protein BU359 (382 aa).

Positions 1-23 (MTNRKSLAMVIPMLLAASNGVNA) are cleaved as a signal peptide.

It belongs to the Gram-negative porin family. Homotrimer.

It localises to the cell outer membrane. Its function is as follows. Forms pores that allow passive diffusion of small molecules across the membrane. This is Porin-like protein BU359 from Buchnera aphidicola subsp. Acyrthosiphon pisum (strain APS) (Acyrthosiphon pisum symbiotic bacterium).